Reading from the N-terminus, the 553-residue chain is Formate--tetrahydrofolate ligase (553 aa).

ATP is bound at residue T63–S70.

This sequence belongs to the formate--tetrahydrofolate ligase family.

The enzyme catalyses (6S)-5,6,7,8-tetrahydrofolate + formate + ATP = (6R)-10-formyltetrahydrofolate + ADP + phosphate. It participates in one-carbon metabolism; tetrahydrofolate interconversion. The polypeptide is Formate--tetrahydrofolate ligase (Limosilactobacillus fermentum (strain NBRC 3956 / LMG 18251) (Lactobacillus fermentum)).